A 551-amino-acid chain; its full sequence is MADGVDHIDIYADVGEEFNQEAEYGGHDQIDLYDDVISPSANNGDAPEDRDYMDTLPPTVGDDVGKGAAPNVVYTYTGKRIALYIGNLTWWTTDEDLTEAVHSLGVNDILEIKFFENRANGQSKGFALVGVGSEASSKKLMDLLPKRELHGQSPVVTPCNKQFLSQFEMQSRKTTQSGQMSGEGKAGPPGGGSRAAFPQGGRGRGRFPGAVPGGDRFPGPAGPGGPPPPFPAGQTPPRPPLGPPGPPGPPGPPPPGQVLPPPLAGPPNRGDRPPPPVLFPGQPFGQPPLGPLPPGPPPPVPGYGPPPGPPPPQQGPPPPPGPFPPRPPGPLGPPLTLAPPPHLPGPPPGAPPPAPHVNPAFFPPPTNSGMPTSDSRGPPPTDPYGRPPPYDRGDYGPPGREMDTARTPLSEAEFEEIMNRNRAISSSAISRAVSDASAGDYGSAIETLVTAISLIKQSKVSADDRCKVLISSLQDCLHGIESKSYGSGSRRERSRERDHSRSREKSRRHKSRSRDRHDDYYRERSRERERHRDRDRDRDRERDREREYRHR.

The interval 1–213 (MADGVDHIDI…RGRFPGAVPG (213 aa)) is necessary for interaction with NXF1. In terms of domain architecture, RRM spans 81-161 (IALYIGNLTW…QSPVVTPCNK (81 aa)). Residues 81–161 (IALYIGNLTW…QSPVVTPCNK (81 aa)) are necessary for interaction with NUDT21/CPSF5. The necessary for nuclear paraspeckles localization stretch occupies residues 81–161 (IALYIGNLTW…QSPVVTPCNK (81 aa)). A Phosphothreonine modification is found at Thr-157. Residues 169-180 (MQSRKTTQSGQM) show a composition bias toward polar residues. 2 disordered regions span residues 169–411 (MQSR…PLSE) and 477–551 (LHGI…YRHR). Residues 184–193 (GKAGPPGGGS) are compositionally biased toward gly residues. The GAR signature appears at 202-206 (RGRGR). The segment covering 207–219 (FPGAVPGGDRFPG) has biased composition (low complexity). Composition is skewed to pro residues over residues 220-265 (PAGP…PLAG), 285-366 (GQPP…PPPT), and 377-388 (GPPPTDPYGRPP). A compositionally biased stretch (basic and acidic residues) spans 389-404 (PYDRGDYGPPGREMDT). Thr-404 and Thr-407 each carry phosphothreonine. The segment at 404–551 (TARTPLSEAE…RDREREYRHR (148 aa)) is sufficient for nuclear speckle localization. Residues 405–551 (ARTPLSEAEF…RDREREYRHR (147 aa)) form a necessary for RNA-binding region. The segment at 481–551 (ESKSYGSGSR…RDREREYRHR (71 aa)) is necessary for interaction with SRSF3, SRSF7 and TRA2B/SFRS10. Residues 489 to 503 (SRRERSRERDHSRSR) show a composition bias toward basic and acidic residues. The interval 490-551 (RRERSRERDH…RDREREYRHR (62 aa)) is arg/Ser-rich domain. Phosphoserine is present on residues Ser-494, Ser-500, Ser-511, Ser-513, and Ser-525. Positions 504-514 (EKSRRHKSRSR) are enriched in basic residues. A sufficient for nuclear targeting region spans residues 510-551 (KSRSRDRHDDYYRERSRERERHRDRDRDRDRERDREREYRHR). The span at 515 to 551 (DRHDDYYRERSRERERHRDRDRDRDRERDREREYRHR) shows a compositional bias: basic and acidic residues.

Belongs to the RRM CPSF6/7 family. In terms of assembly, component of the cleavage factor Im (CFIm) complex which is a heterotetramer composed of two subunits of NUDT21/CPSF5 and two subunits of CPSF6 or CPSF7 or a heterodimer of CPSF6 and CPSF7. The cleavage factor Im (CFIm) complex associates with the CPSF and CSTF complexes to promote the assembly of the core mRNA 3'-processing machinery. Associates with the exon junction complex (EJC). Associates with the 80S ribosome particle. Interacts (via the RRM domain) with NUDT21/CPSF5; this interaction is direct and enhances binding to RNA. Interacts (via Arg/Ser-rich domain) with FIP1L1 (preferentially via unphosphorylated form and Arg/Glu/Asp-rich domain); this interaction mediates, at least in part, the interaction between the CFIm and CPSF complexes and may be inhibited by CPSF6 hyper-phosphorylation. Interacts (via N-terminus) with NXF1; this interaction is direct. Interacts with SRSF3. Interacts with SRSF7. Interacts with SNRNP70. Interacts with TRA2B/SFRS10. Interacts with UPF1. Interacts with UPF3B. Interacts with VIRMA. Interacts (via Arg/Ser-rich domain) with TNPO3; promoting nuclear import of CPSF6 independently of its phosphorylation status. Interacts with YTHDC1. Post-translationally, phosphorylated. Phosphorylated in the Arg/Ser-rich domain by SRPK1, in vitro. In terms of processing, symmetrically dimethylated on arginine residues by PRMT5 in a WDR77- and CLNS1A-dependent manner. Asymmetrically dimethylated on arginine residues by PRMT1. Symmetrically dimethylated on arginine residues in the GAR motif by PRMT5 in a WDR77- and CLNS1A-dependent manner. Asymmetrically dimethylated on arginine residues in the GAR motif by PRMT1. Expressed in testis. Expressed in male germ cells (at protein level).

It is found in the nucleus. Its subcellular location is the nucleoplasm. The protein localises to the nucleus speckle. The protein resides in the cytoplasm. Its function is as follows. Component of the cleavage factor Im (CFIm) complex that functions as an activator of the pre-mRNA 3'-end cleavage and polyadenylation processing required for the maturation of pre-mRNA into functional mRNAs. CFIm contributes to the recruitment of multiprotein complexes on specific sequences on the pre-mRNA 3'-end, so called cleavage and polyadenylation signals (pA signals). Most pre-mRNAs contain multiple pA signals, resulting in alternative cleavage and polyadenylation (APA) producing mRNAs with variable 3'-end formation. The CFIm complex acts as a key regulator of cleavage and polyadenylation site choice during APA through its binding to 5'-UGUA-3' elements localized in the 3'-untranslated region (UTR) for a huge number of pre-mRNAs. CPSF6 enhances NUDT21/CPSF5 binding to 5'-UGUA-3' elements localized upstream of pA signals and promotes RNA looping, and hence activates directly the mRNA 3'-processing machinery. Plays a role in mRNA export. This is Cleavage and polyadenylation specificity factor subunit 6 from Mus musculus (Mouse).